Consider the following 530-residue polypeptide: Pre-mRNA-splicing factor PRP9 (530 aa).

Residues Ile280–Lys310 form a Matrin-type 1 zinc finger. The segment at Asp367–Glu388 is disordered. Residues Ser368–Glu388 show a composition bias toward basic and acidic residues. The segment at Tyr421 to Cys452 adopts a Matrin-type 2 zinc-finger fold. The segment at Ala488–Met516 is disordered. A compositionally biased stretch (acidic residues) spans Leu504–Gly513.

This sequence belongs to the SF3A3 family. As to quaternary structure, belongs to the CWC complex (or CEF1-associated complex), a spliceosome sub-complex reminiscent of a late-stage spliceosome composed of the U2, U5 and U6 snRNAs and at least BUD13, BUD31, BRR2, CDC40, CEF1, CLF1, CUS1, CWC2, CWC15, CWC21, CWC22, CWC23, CWC24, CWC25, CWC27, ECM2, HSH155, IST3, ISY1, LEA1, MSL1, NTC20, PRP8, PRP9, PRP11, PRP19, PRP21, PRP22, PRP45, PRP46, SLU7, SMB1, SMD1, SMD2, SMD3, SMX2, SMX3, SNT309, SNU114, SPP2, SYF1, SYF2, RSE1 and YJU2.

It is found in the nucleus. Its function is as follows. mRNA splicing factors, PRP9, PRP11, and PRP21, are necessary for binding of the U2 snRNP to the pre-mRNA in an early step of spliceosome assembly. This is Pre-mRNA-splicing factor PRP9 (PRP9) from Saccharomyces cerevisiae (strain ATCC 204508 / S288c) (Baker's yeast).